Reading from the N-terminus, the 1785-residue chain is MDFMSPKFSLTDVEYPAWCQDDEVPITMQEIREIFVELMDKFGFQKSSMENMYQHLMGQLDSRASRTGAQNALVSLHVSYIGGEHANYRKWYFAAQLDLDEEIGFQNMRLHGKARQRNVKMAKKRGVSIKEQIKQWNEKEQEFINNHPKITLTQEQLEDQTNLKSADYKWKLKMKKLTPENMIRQLALYLLCWGEANQVRFAPECLCFIFKCALDYDISTSSSEKTVKSPEYSYLNDVITPLYEFLRGQVYKKDAKGNWKRREKDHKNIIGYDDINQLFWYPEGFERIILNNGERLVDKPLEERYLYFKDVAWSKVFYKTYRETRSWKHCFTNFNRFWIIHFAPFWFFTTFNSPTLYTKNYIQLLNNQPTPQVRLSVIAFGGTIACLVQILATVFEWGFVPREWPGAQHLSSRMIGLLFCLAINLGPSVYVLGFFEWDVHSKSAYIVSIVQLIIAFLTTFFFAVRPLGGLFRPYLNKDKKHRRYISSQTFTASFPKLTGRSKWFSYGLWVFVYLAKYIESYFFLTLSLRDPIRVLSIMDLSRCQGEYLLGPILCKWQAKITLVLMLLSDLGLFFLDTYLWYIICNCIFSIVLSFSLGTSILTPWKNVYSRLPKRIYSKILATSEMDVKFKAKILISQVWNAIVISMYREHLLSIEHLQRLLFQQVDSLMGDTRTLKSPTFFVAQDDSTFKSMEFFPSNSEAKRRISFFAQSLATPISEPVPVDCMPTFTVLVPHYSEKILLGLKEIIREESPKSKITVLEYLKHLHPTEWECFVKDTKLLSMEKSFLKEAESSHDEDRLEIPDALYDPRSSPLSDHTESRKLPTEDDLIKEKINDLPFSYFGFNSSEPSYTLRTRIWASLRTQTLYRTLSGFMNYSKAIKLLYRIENPSLVSLYRGNNEALENDLENMASRKFRMVVAMQRYAKFNKDEVEATELLLRAYPNMFISYLLEELEQNESEKTYYSCLTNGYAEFDEESGLRKPIFKIRLSGNPILGDGKSDNQNHSIIFYRGEYIQVIDANQDNYLEECLKIRSVLSEFEELELNPTIPYIPGIEYEEEPPPIAIVGSREYIFSENIGVLGDIAAGKEQTFGTLFARTLAEIGGKLHYGHPDFLNGIFMTTRGGLSKAQRGLHLNEDIYAGMNAICRGGKIKHSDYYQCGKGRDLGFGSILNFTTKIGAGMGEQLLSREYYYLGTQLPMDRFLSFFYAHPGFHLNNLFISFSVQLFFVLLLNLGALNHEIIACFYDKDAPITNLETPVGCYNIQPALHWVSIFVLSIFIVFFIAFAPLLIQEVLEKGIWRAASRFLHHLLSMAPLFEVFVCQVYSNSLLMDLTFGGAKYISTGRGFAITRLDFFTLYSRFVNISIYSGFQVFFMLLFAIISMWQPALLWFWITVISMCFAPFIFNPHQFAFMDFFIDYKTFIHWLFSGNTKYQKESWANFVKSSRSRFTGYKSKTVDDISEDSGHDSKKARFWNVFFAELFLPFCVFLFNFTAFSFINAQTGVSDSTPTSAVFRLLLVTFLPIFLNSIVLFLLFWVSLFVVPGLSYCCKDAGAVIAFIAHTFSVLVYLLDFELMWFLQGWNFTRTLILLITCINMHLILFKVFTTIFLTREYKNNKAHLAWWNGKWYNTGMGWSIILQPIREYFVKIMESSYFAADFFLGHFLLFIQTPIILLPFIDYWHTMVLFWMNPRSIIAHKRILTRKQRALRSRIVSKYFSLYFVMLGVLLFMLIAPFFAGDFVSSPQELLEGTLFEGIFQPNNQNNNDTGPNAPSTILTTTPTLPTFRTVA.

A run of 8 helical transmembrane segments spans residues 337–357 (FWII…PTLY), 375–395 (LSVI…ATVF), 415–435 (IGLL…LGFF), 444–464 (AYIV…FFAV), 508–528 (LWVF…TLSL), 547–567 (YLLG…LMLL), 572–592 (LFFL…SIVL), and 712–732 (LATP…TVLV). Composition is skewed to basic and acidic residues over residues 791–801 (ESSHDEDRLEI) and 815–824 (DHTESRKLPT). The tract at residues 791–824 (ESSHDEDRLEIPDALYDPRSSPLSDHTESRKLPT) is disordered. N-linked (GlcNAc...) asparagine glycosylation is found at Asn844, Asn874, Asn955, Asn1002, and Asn1170. The next 3 helical transmembrane spans lie at 1215 to 1235 (LFIS…GALN), 1268 to 1288 (VSIF…PLLI), and 1303 to 1323 (FLHH…QVYS). The N-linked (GlcNAc...) asparagine glycan is linked to Asn1360. A run of 5 helical transmembrane segments spans residues 1370–1390 (FFML…WFWI), 1394–1414 (SMCF…DFFI), 1475–1495 (FAEL…FSFI), 1514–1534 (LLVT…LFWV), and 1549–1569 (AGAV…LLDF). Asn1579 carries an N-linked (GlcNAc...) asparagine glycan. 3 helical membrane passes run 1585–1605 (ILLI…TTIF), 1655–1675 (FFLG…PFID), and 1713–1733 (FSLY…PFFA). The N-linked (GlcNAc...) asparagine glycan is linked to Asn1761.

Belongs to the glycosyltransferase 48 family. Post-translationally, N-glycosylated.

It localises to the mitochondrion. The protein resides in the membrane. It catalyses the reaction [(1-&gt;3)-beta-D-glucosyl](n) + UDP-alpha-D-glucose = [(1-&gt;3)-beta-D-glucosyl](n+1) + UDP + H(+). Functionally, required for spore wall assembly. The protein is 1,3-beta-glucan synthase component FKS3 (FKS3) of Saccharomyces cerevisiae (strain ATCC 204508 / S288c) (Baker's yeast).